The chain runs to 550 residues: Arginine--tRNA ligase (550 aa).

The short motif at 125-135 (ANPTGPLHIGH) is the 'HIGH' region element.

Belongs to the class-I aminoacyl-tRNA synthetase family. Monomer.

Its subcellular location is the cytoplasm. It catalyses the reaction tRNA(Arg) + L-arginine + ATP = L-arginyl-tRNA(Arg) + AMP + diphosphate. In Lawsonia intracellularis (strain PHE/MN1-00), this protein is Arginine--tRNA ligase.